A 269-amino-acid polypeptide reads, in one-letter code: 4-hydroxy-tetrahydrodipicolinate reductase (269 aa).

NAD(+)-binding positions include 11–16 and Glu-37; that span reads GASGRM. Position 38 (Arg-38) interacts with NADP(+). Residues 101–103 and 125–128 each bind NAD(+); these read GTT and AGNM. The active-site Proton donor/acceptor is His-158. His-159 contacts (S)-2,3,4,5-tetrahydrodipicolinate. The active-site Proton donor is Lys-162. 168–169 serves as a coordination point for (S)-2,3,4,5-tetrahydrodipicolinate; it reads GT.

It belongs to the DapB family.

The protein resides in the cytoplasm. The enzyme catalyses (S)-2,3,4,5-tetrahydrodipicolinate + NAD(+) + H2O = (2S,4S)-4-hydroxy-2,3,4,5-tetrahydrodipicolinate + NADH + H(+). It carries out the reaction (S)-2,3,4,5-tetrahydrodipicolinate + NADP(+) + H2O = (2S,4S)-4-hydroxy-2,3,4,5-tetrahydrodipicolinate + NADPH + H(+). It functions in the pathway amino-acid biosynthesis; L-lysine biosynthesis via DAP pathway; (S)-tetrahydrodipicolinate from L-aspartate: step 4/4. Catalyzes the conversion of 4-hydroxy-tetrahydrodipicolinate (HTPA) to tetrahydrodipicolinate. In Ruegeria pomeroyi (strain ATCC 700808 / DSM 15171 / DSS-3) (Silicibacter pomeroyi), this protein is 4-hydroxy-tetrahydrodipicolinate reductase.